The sequence spans 524 residues: Hydroxysteroid dehydrogenase-like protein 2 (524 aa).

NADP(+) is bound by residues 17 to 23, K42, and D74; that span reads GASRGIG. K42 is subject to N6-(2-hydroxyisobutyryl)lysine. Position 116 is an N6-acetyllysine (K116). Y168 (proton acceptor) is an active-site residue. K172 serves as a coordination point for NADP(+). Over residues 283 to 300 the composition is skewed to basic and acidic residues; it reads EEKESYDPVPEVKEEKLQ. Residues 283–410 are disordered; that stretch reads EEKESYDPVP…PLLQSVLPPK (128 aa). The segment covering 301 to 391 has biased composition (low complexity); the sequence is LQEQPQLQEQ…QQQPQQRPQQ (91 aa). In terms of domain architecture, SCP2 spans 414-521; the sequence is GAVEETFRIV…KLEKLMTHMN (108 aa). K424 bears the N6-succinyllysine mark.

Belongs to the short-chain dehydrogenases/reductases (SDR) family.

The protein resides in the peroxisome. It localises to the mitochondrion. Has apparently no steroid dehydrogenase activity. Controls bile acid (BA) and lipid metabolism in response to nutritional cues. This is Hydroxysteroid dehydrogenase-like protein 2 (Hsdl2) from Rattus norvegicus (Rat).